The primary structure comprises 156 residues: Terrestric acid biosynthesis cluster protein E (156 aa).

It functions in the pathway secondary metabolite biosynthesis. Part of the tra gene cluster that produces terrestric acid. The clavatol biosynthesis cluster cla and the terrestric acid cluster tra are both involved in the production of peniphenones and penilactones. The non-reducing PKS claF is responsible for the formation of clavatol from successive condensations of 3 malonyl-CoA units, presumably with a simple acetyl-CoA starter unit, and 2 methylation steps. The esterase claE probably collaborates with claF by catalyzing the hydrolysis of ACP-bound acyl intermediates to free the ACP from stalled intermediates. The clavatol oxidase claD then converts clavatol to hydroxyclavatol. Spontaneous dehydration of hydroxyclavatol leads to the accumulation of the highly active ortho-quinone methide. On the other hand, the PKS-NRPS hybrid traA is involved in the formation of crustosic acid, with the help of traB and traD. The polyketide synthase module (PKS) of traA is responsible for the synthesis of the polyketide backbone via the condensation of an acetyl-CoA starter unit with 3 malonyl-CoA units. The downstream nonribosomal peptide synthetase (NRPS) module then amidates the carboxyl end of the polyketide with L-malic acid. Because traA lacks a designated enoylreductase (ER) domain, the required activity is provided the enoyl reductase traG. Crustosic acid undergoes decarboxylation and isomerization to the terrestric acid, catalyzed by the 2-oxoglutarate-dependent dioxygenase traH. Both acids are further converted to the 2 gamma-butyrolactones (R)-5-methyltetronic acid and (S)-5-carboxylmethyltetronic acid, with involvement of the cytochrome P450 monooxygenase claJ. Spontaneous addition of the methide to these gamma-butyrolactones leads to peniphenone D and penilactone D, which undergo again stereospecific attacking by methide to give penilactones A and B. TraE seems not to be involved in the biosynthesis of peniphenones and penilactones in the conditions used to study its function. The sequence is that of Terrestric acid biosynthesis cluster protein E from Penicillium crustosum (Blue mold fungus).